The chain runs to 303 residues: MQERQYVGRFAPSPSGSLHFGSLIAALGSYLQARAQRGQWLVRIEDIDPPREVAGAADRILSALEHYGLLWDGQVIYQSQRHEAYRATLDLLHQQGLSYCCNCTRSRIQQLGGLYDGHCRHLNLGPQGAAIRLRQSTPVYAFHDRLQGELQADPALAREDFIIRRRDGLFAYNLAVVVDDHFQGVTEIVRGADLIEPTVRQIALYHQLQAPVPTYVHLPLALGANGSKLSKQNHAPALPDGDPRPTLVAALKFLRQPLPESWQDLDLSLLLSWAVAHWKLEDVPRREAISLDENTSAFSKEPW.

L-glutamate contacts are provided by residues Arg9–Ser13 and Glu45. Positions Pro12–Ser22 match the 'HIGH' region motif. Zn(2+) contacts are provided by Cys101, Cys103, Tyr115, and Cys119. Residues Tyr172 and Arg190 each contribute to the L-glutamate site. The 'KMSKS' region signature appears at Lys228–Gln232. Lys231 contacts ATP.

Belongs to the class-I aminoacyl-tRNA synthetase family. GluQ subfamily. Zn(2+) serves as cofactor.

Its function is as follows. Catalyzes the tRNA-independent activation of glutamate in presence of ATP and the subsequent transfer of glutamate onto a tRNA(Asp). Glutamate is transferred on the 2-amino-5-(4,5-dihydroxy-2-cyclopenten-1-yl) moiety of the queuosine in the wobble position of the QUC anticodon. The polypeptide is Glutamyl-Q tRNA(Asp) synthetase (Serratia proteamaculans (strain 568)).